The sequence spans 248 residues: Ribosomal RNA small subunit methyltransferase J (248 aa).

S-adenosyl-L-methionine contacts are provided by residues R98–D99, E114–R115, S150–S151, and D168.

It belongs to the methyltransferase superfamily. RsmJ family.

The protein localises to the cytoplasm. The enzyme catalyses guanosine(1516) in 16S rRNA + S-adenosyl-L-methionine = N(2)-methylguanosine(1516) in 16S rRNA + S-adenosyl-L-homocysteine + H(+). Functionally, specifically methylates the guanosine in position 1516 of 16S rRNA. The chain is Ribosomal RNA small subunit methyltransferase J from Shewanella baltica (strain OS185).